Here is a 376-residue protein sequence, read N- to C-terminus: Succinyl-diaminopimelate desuccinylase (376 aa).

His67 is a binding site for Zn(2+). Residue Asp69 is part of the active site. Residue Asp100 participates in Zn(2+) binding. Glu134 (proton acceptor) is an active-site residue. 3 residues coordinate Zn(2+): Glu135, Glu163, and His349.

It belongs to the peptidase M20A family. DapE subfamily. As to quaternary structure, homodimer. Zn(2+) serves as cofactor. Co(2+) is required as a cofactor.

The catalysed reaction is N-succinyl-(2S,6S)-2,6-diaminopimelate + H2O = (2S,6S)-2,6-diaminopimelate + succinate. It participates in amino-acid biosynthesis; L-lysine biosynthesis via DAP pathway; LL-2,6-diaminopimelate from (S)-tetrahydrodipicolinate (succinylase route): step 3/3. Functionally, catalyzes the hydrolysis of N-succinyl-L,L-diaminopimelic acid (SDAP), forming succinate and LL-2,6-diaminopimelate (DAP), an intermediate involved in the bacterial biosynthesis of lysine and meso-diaminopimelic acid, an essential component of bacterial cell walls. This chain is Succinyl-diaminopimelate desuccinylase, found in Nitrosomonas europaea (strain ATCC 19718 / CIP 103999 / KCTC 2705 / NBRC 14298).